We begin with the raw amino-acid sequence, 239 residues long: MNLLRYTSKSIQKAIEHRIEHRPDRENLHWNPELVSESPAPDEKALSSSSAARSNPYVARAPTETSDASLKETMESVKGVLGRWGRRVGEAAMKAESLAGNTWQHPLRAAMGRIAQSTKVLAEGGYEKIFRQTFETVPEEQLQNSFACYLSTSAGPVMGVLYVSTAKLAYCSDTSLVVIPLHQLKSVNPSISTVNPAEKYIQVISVDDHEFWFMGFLNYEGAVTSLQDTLQAGASVCVI.

The disordered stretch occupies residues 29–68; sequence HWNPELVSESPAPDEKALSSSSAARSNPYVARAPTETSDA. The 64-residue stretch at 128–191 folds into the GRAM domain; it reads KIFRQTFETV…HQLKSVNPSI (64 aa).

The protein belongs to the GEM family.

In Arabidopsis thaliana (Mouse-ear cress), this protein is Putative GEM-like protein 3.